Reading from the N-terminus, the 241-residue chain is 15,16-dihydrobiliverdin:ferredoxin oxidoreductase (241 aa).

The interval 16 to 35 (RGGQPAAVPEGLEHCHSSKS) is disordered.

The protein belongs to the HY2 family.

It carries out the reaction 15,16-dihydrobiliverdin + oxidized 2[4Fe-4S]-[ferredoxin] = biliverdin IXalpha + reduced 2[4Fe-4S]-[ferredoxin] + 2 H(+). Functionally, catalyzes the two-electron reduction of biliverdin IX-alpha at the C15 methine bridge. In Synechococcus sp. (strain WH7803), this protein is 15,16-dihydrobiliverdin:ferredoxin oxidoreductase.